Here is a 166-residue protein sequence, read N- to C-terminus: MADTARARRLAKRIAQIVASGLEYEVKDPRLAMVTITDARVTPDLRDATVYYTVFGDDADHASTAAALASATGVLRSRVGQQTGVRFTPTLTFVADTVPDDARRLDELLAQAREADAEVARLASTAEHAGDADPYRVDTEDDDDDTDGADAEARSDADVRRGPQSG.

The disordered stretch occupies residues 122 to 166 (LASTAEHAGDADPYRVDTEDDDDDTDGADAEARSDADVRRGPQSG). Over residues 128 to 138 (HAGDADPYRVD) the composition is skewed to basic and acidic residues. The span at 139–150 (TEDDDDDTDGAD) shows a compositional bias: acidic residues. Positions 151–166 (AEARSDADVRRGPQSG) are enriched in basic and acidic residues.

This sequence belongs to the RbfA family. As to quaternary structure, monomer. Binds 30S ribosomal subunits, but not 50S ribosomal subunits or 70S ribosomes.

It localises to the cytoplasm. One of several proteins that assist in the late maturation steps of the functional core of the 30S ribosomal subunit. Associates with free 30S ribosomal subunits (but not with 30S subunits that are part of 70S ribosomes or polysomes). Required for efficient processing of 16S rRNA. May interact with the 5'-terminal helix region of 16S rRNA. This is Ribosome-binding factor A from Saccharopolyspora erythraea (strain ATCC 11635 / DSM 40517 / JCM 4748 / NBRC 13426 / NCIMB 8594 / NRRL 2338).